The chain runs to 429 residues: Tubby-like F-box protein 5 (429 aa).

The 56-residue stretch at 53 to 108 (TRWANLPAALLRDVMKKLDESESTWPARKQVVACAGVCKTWRLMCKDIVKSPEFSG) folds into the F-box domain. A disordered region spans residues 360–385 (QPGSGSDGGALATRPSLSPQQPEQSN). The segment covering 374 to 383 (PSLSPQQPEQ) has biased composition (polar residues).

This sequence belongs to the TUB family. As to expression, mostly expressed in roots, flowers and siliques.

The protein is Tubby-like F-box protein 5 of Arabidopsis thaliana (Mouse-ear cress).